The primary structure comprises 111 residues: Large ribosomal subunit protein uL22 (111 aa).

The protein belongs to the universal ribosomal protein uL22 family. In terms of assembly, part of the 50S ribosomal subunit.

Its function is as follows. This protein binds specifically to 23S rRNA; its binding is stimulated by other ribosomal proteins, e.g. L4, L17, and L20. It is important during the early stages of 50S assembly. It makes multiple contacts with different domains of the 23S rRNA in the assembled 50S subunit and ribosome. The globular domain of the protein is located near the polypeptide exit tunnel on the outside of the subunit, while an extended beta-hairpin is found that lines the wall of the exit tunnel in the center of the 70S ribosome. This Legionella pneumophila (strain Lens) protein is Large ribosomal subunit protein uL22.